The chain runs to 151 residues: Probable cGMP 3',5'-cyclic phosphodiesterase subunit delta (151 aa).

Belongs to the PDE6D/unc-119 family. Interacts with Pde6.

Its subcellular location is the nucleus. The protein localises to the cytoplasm. In Drosophila mojavensis (Fruit fly), this protein is Probable cGMP 3',5'-cyclic phosphodiesterase subunit delta.